Here is a 382-residue protein sequence, read N- to C-terminus: Mannitol-1-phosphate 5-dehydrogenase (382 aa).

Position 3–14 (3–14) interacts with NAD(+); the sequence is ALHFGAGNIGRG.

This sequence belongs to the mannitol dehydrogenase family.

It carries out the reaction D-mannitol 1-phosphate + NAD(+) = beta-D-fructose 6-phosphate + NADH + H(+). The chain is Mannitol-1-phosphate 5-dehydrogenase from Cronobacter sakazakii (strain ATCC BAA-894) (Enterobacter sakazakii).